The following is a 258-amino-acid chain: Pyridoxine 5'-phosphate synthase (258 aa).

Asn6 contacts 3-amino-2-oxopropyl phosphate. 8 to 9 (DH) lines the 1-deoxy-D-xylulose 5-phosphate pocket. Arg17 is a 3-amino-2-oxopropyl phosphate binding site. His42 acts as the Proton acceptor in catalysis. Positions 44 and 49 each coordinate 1-deoxy-D-xylulose 5-phosphate. The Proton acceptor role is filled by Glu69. Thr99 contacts 1-deoxy-D-xylulose 5-phosphate. The active-site Proton donor is His213. Residues Gly214 and 235 to 236 (GQ) each bind 3-amino-2-oxopropyl phosphate.

This sequence belongs to the PNP synthase family. As to quaternary structure, homooctamer; tetramer of dimers.

It is found in the cytoplasm. The catalysed reaction is 3-amino-2-oxopropyl phosphate + 1-deoxy-D-xylulose 5-phosphate = pyridoxine 5'-phosphate + phosphate + 2 H2O + H(+). The protein operates within cofactor biosynthesis; pyridoxine 5'-phosphate biosynthesis; pyridoxine 5'-phosphate from D-erythrose 4-phosphate: step 5/5. Catalyzes the complicated ring closure reaction between the two acyclic compounds 1-deoxy-D-xylulose-5-phosphate (DXP) and 3-amino-2-oxopropyl phosphate (1-amino-acetone-3-phosphate or AAP) to form pyridoxine 5'-phosphate (PNP) and inorganic phosphate. This chain is Pyridoxine 5'-phosphate synthase, found in Sulfurovum sp. (strain NBC37-1).